Here is a 133-residue protein sequence, read N- to C-terminus: Protein archease (133 aa).

Ca(2+) contacts are provided by D11, D132, and L133.

The protein belongs to the archease family.

Activates the tRNA-splicing ligase complex by facilitating the enzymatic turnover of catalytic subunit RtcB. Acts by promoting the guanylylation of RtcB, a key intermediate step in tRNA ligation. Can also alter the NTP specificity of RtcB such that ATP, dGTP or ITP is used efficiently. The chain is Protein archease from Thermoplasma volcanium (strain ATCC 51530 / DSM 4299 / JCM 9571 / NBRC 15438 / GSS1).